A 27-amino-acid chain; its full sequence is Secretin (27 aa).

Val-27 is subject to Valine amide.

It belongs to the glucagon family.

Its subcellular location is the secreted. Hormone involved in different processes, such as regulation of the pH of the duodenal content, food intake and water homeostasis. Exerts its biological effects by binding to secretin receptor (SCTR), a G-protein coupled receptor expressed in the basolateral domain of several cells. Acts as a key gastrointestinal hormone by regulating the pH of the duodenal content. Secreted by S cells of the duodenum in the crypts of Lieberkuehn and regulates the pH of the duodenum by (1) inhibiting the secretion of gastric acid from the parietal cells of the stomach and (2) stimulating the production of bicarbonate (NaHCO(3)) from the ductal cells of the pancreas. Production of bicarbonate is essential to neutralize the pH and ensure no damage is done to the small intestine by the gastric acid. In addition to regulating the pH of the duodenal content, plays a central role in diet induced thermogenesis: acts as a non-sympathetic brown fat (BAT) activator mediating prandial thermogenesis, which consequentially induces satiation. Mechanistically, secretin released by the gut after a meal binds to secretin receptor (SCTR) in brown adipocytes, activating brown fat thermogenesis by stimulating lipolysis, which is sensed in the brain and promotes satiation. Also able to stimulate lipolysis in white adipocytes. Also plays an important role in cellular osmoregulation: released into the systemic circulation in response to hyperosmolality and acts at different levels in the hypothalamus, pituitary and kidney to regulate water homeostasis. Also plays a role in the central nervous system, possibly by acting as a neuropeptide hormone: required for hippocampal synaptic function and neural progenitor cells maintenance. The sequence is that of Secretin from Canis lupus familiaris (Dog).